Reading from the N-terminus, the 855-residue chain is MNAVDTQYLEKHTPMMRQYLTLKAETPDMLLFYRMGDFYELFYDDAKRASELLGISLTARGKSGGDPIPMAGIPYHAVEGYLAKLVQLRVSVAICEQIGDPATTKGPVERKIVRIVTPGTLTDEALLQERQDNLLAAVYHGKVGFGYATLDVSSGRFVVTELASKEALEAELQRTNPAELLYSEDFSEPALIASLSGKRRRPEWEFDYDTSYKLLLEQFGTKDLYGFGLGEVRLSLQAAGCLIQYVKDTQRTALPHINAITRFNQCDSIVLDAATRKNLELTRNLQGGSDNTLASVLDNTATPMGSRMLQRWIHEPLRNHNIIRARHDAIDELLDNGYHESLHEQLKALGDIERITARLAIRSARPRDFARLRQALALLPEIQQQLADCNSPHLKALSSHLGDFPEEHALLSRAIVDNPPMLIRDGGVIKEGYHNELDEWRKLSQGATDYLAELEAREKAATGASTLKVGYNRVHGYYIEVSRRESDLVPMSYQRRQTLKNTERYIVAELKEHEEKVLSSQGKALALEKQLWEELFDLLMPRLHELQAFARAAAELDVITNFAERAEQLDYHRPELTAQSGIHIEAGRHPVVERVSQTPFIANPVSLNPARRMLIVTGPNMGGKSTYMRQVALITLMAHIGSFVPAQKAAIGPVDRIFTRIGAADDLASGRSTFMVEMTETANILHNATPESLVLMDEIGRGTSTYDGLSLAWSAAEHLAQNLKSMTLFATHYFELTQLPDQMENVANVHLDAIEHDDTIAFMHAVQEGAASKSYGLQVAALAGVPAKVVQAAKHKLHHLESRDREEELPELRQAQLSMTMPETSKALDRLDTIDPDSLTPRQALDLLYELKQLR.

618–625 (GPNMGGKS) is a binding site for ATP.

This sequence belongs to the DNA mismatch repair MutS family.

Its function is as follows. This protein is involved in the repair of mismatches in DNA. It is possible that it carries out the mismatch recognition step. This protein has a weak ATPase activity. This chain is DNA mismatch repair protein MutS, found in Shewanella loihica (strain ATCC BAA-1088 / PV-4).